The chain runs to 351 residues: Phosphoribosylformylglycinamidine cyclo-ligase (351 aa).

It belongs to the AIR synthase family.

The protein localises to the cytoplasm. The enzyme catalyses 2-formamido-N(1)-(5-O-phospho-beta-D-ribosyl)acetamidine + ATP = 5-amino-1-(5-phospho-beta-D-ribosyl)imidazole + ADP + phosphate + H(+). It functions in the pathway purine metabolism; IMP biosynthesis via de novo pathway; 5-amino-1-(5-phospho-D-ribosyl)imidazole from N(2)-formyl-N(1)-(5-phospho-D-ribosyl)glycinamide: step 2/2. The chain is Phosphoribosylformylglycinamidine cyclo-ligase from Burkholderia multivorans (strain ATCC 17616 / 249).